The sequence spans 357 residues: Phenylalanine--tRNA ligase alpha subunit (357 aa).

Glu-259 is a binding site for Mg(2+).

This sequence belongs to the class-II aminoacyl-tRNA synthetase family. Phe-tRNA synthetase alpha subunit type 1 subfamily. In terms of assembly, tetramer of two alpha and two beta subunits. It depends on Mg(2+) as a cofactor.

The protein resides in the cytoplasm. It carries out the reaction tRNA(Phe) + L-phenylalanine + ATP = L-phenylalanyl-tRNA(Phe) + AMP + diphosphate + H(+). In Jannaschia sp. (strain CCS1), this protein is Phenylalanine--tRNA ligase alpha subunit.